The sequence spans 308 residues: Acetaldehyde dehydrogenase 1 (308 aa).

Residue 10-13 (SGNI) participates in NAD(+) binding. The Acyl-thioester intermediate role is filled by cysteine 128. NAD(+)-binding positions include 159–167 (SAGPGTRAN) and asparagine 285.

Belongs to the acetaldehyde dehydrogenase family.

The enzyme catalyses acetaldehyde + NAD(+) + CoA = acetyl-CoA + NADH + H(+). This is Acetaldehyde dehydrogenase 1 from Salinispora arenicola (strain CNS-205).